The primary structure comprises 649 residues: MAFIKLLRKTKDEPSRLAKAVRHLQVTLDDPHATYRPRDVLFGQVLLDLKQNVANVRVRLTFIGEVKSKYGTAHKRGGCFMEKSTVLYGDDGDLDTDEMEPTVNGLTKGVHKFPFSIRVPSGKKIHSSIKFERGSVSYHLMAVFESVVEPEGVSAKVRTKVNILVPIDVYRYSDVVVKTILLNSNAKSKSHKINSNDHNGHLNGDVTTLTTSDGSSEGTKKTISESQIINNLSQRQVLQKSKSEGSKSESIQASTGQINQLPETSSQVSYNAVLTNGMNRDADNQTVKIDVRLPHSGFVQGEYIPLTINVSHYREYYHPAGVIATLVRVCKVASGRKEDTKEIYRKDICQSISPLLIESNKLENTISTYLKVPNDIIASMTSLPEHFTFQYFVEVVINLSRKLEIYSHSQKPLSYILEKQKTKKPLTIPRDLKELNLPASVNENGAWEVPRPSLNNEKSNGGIDSSRNDFQSKFGSAFNKSTLFGLKNIDEIHVAEQTIIFDDMVDVERLKRMRNVAGLSIETIIGNKRSSPAIDLAKLEISKLSQGKVMKSNGTSKNTSSSGSIESNSIVRYRYISFEQDTQSSTDSYDEDITKMGNQLNEWLSPANAYEEYYPVPEYSANENVFASEDKQELEYKRLHELESDPPQF.

Disordered stretches follow at residues Lys187 to Glu225, Gln239 to Pro262, and Ala446 to Ser466. 3 stretches are compositionally biased toward polar residues: residues Asp205–Glu217, Ile251–Pro262, and Ser453–Ser466.

The protein belongs to the arrestin family. PalF/RIM8 subfamily.

In terms of biological role, required for the proteolytic cleavage of the transcription factor RIM101 in response to alkaline ambient pH. The polypeptide is pH-response regulator protein palF/RIM8 (RIM8) (Candida glabrata (strain ATCC 2001 / BCRC 20586 / JCM 3761 / NBRC 0622 / NRRL Y-65 / CBS 138) (Yeast)).